The sequence spans 166 residues: Lipoprotein signal peptidase (166 aa).

Transmembrane regions (helical) follow at residues 9–29 (ASGA…FDQL), 45–65 (ALTS…FGFL), 71–91 (WQRW…CFLL), and 100–120 (FSVS…DRLV). Residues aspartate 126 and aspartate 144 contribute to the active site. The helical transmembrane segment at 135–155 (WHFPAFNLADSAITVGAVLLI) threads the bilayer.

It belongs to the peptidase A8 family.

The protein localises to the cell inner membrane. It catalyses the reaction Release of signal peptides from bacterial membrane prolipoproteins. Hydrolyzes -Xaa-Yaa-Zaa-|-(S,diacylglyceryl)Cys-, in which Xaa is hydrophobic (preferably Leu), and Yaa (Ala or Ser) and Zaa (Gly or Ala) have small, neutral side chains.. The protein operates within protein modification; lipoprotein biosynthesis (signal peptide cleavage). This protein specifically catalyzes the removal of signal peptides from prolipoproteins. The sequence is that of Lipoprotein signal peptidase from Burkholderia cenocepacia (strain HI2424).